A 447-amino-acid polypeptide reads, in one-letter code: Probable glycine dehydrogenase (decarboxylating) subunit 1 (447 aa).

Belongs to the GcvP family. N-terminal subunit subfamily. As to quaternary structure, the glycine cleavage system is composed of four proteins: P, T, L and H. In this organism, the P 'protein' is a heterodimer of two subunits.

The enzyme catalyses N(6)-[(R)-lipoyl]-L-lysyl-[glycine-cleavage complex H protein] + glycine + H(+) = N(6)-[(R)-S(8)-aminomethyldihydrolipoyl]-L-lysyl-[glycine-cleavage complex H protein] + CO2. In terms of biological role, the glycine cleavage system catalyzes the degradation of glycine. The P protein binds the alpha-amino group of glycine through its pyridoxal phosphate cofactor; CO(2) is released and the remaining methylamine moiety is then transferred to the lipoamide cofactor of the H protein. The polypeptide is Probable glycine dehydrogenase (decarboxylating) subunit 1 (Bacillus thuringiensis subsp. konkukian (strain 97-27)).